We begin with the raw amino-acid sequence, 298 residues long: Acetylglutamate kinase (298 aa).

Substrate is bound by residues 69–70, arginine 91, and asparagine 196; that span reads GG.

Belongs to the acetylglutamate kinase family. ArgB subfamily.

The protein localises to the cytoplasm. It catalyses the reaction N-acetyl-L-glutamate + ATP = N-acetyl-L-glutamyl 5-phosphate + ADP. Its pathway is amino-acid biosynthesis; L-arginine biosynthesis; N(2)-acetyl-L-ornithine from L-glutamate: step 2/4. In terms of biological role, catalyzes the ATP-dependent phosphorylation of N-acetyl-L-glutamate. The chain is Acetylglutamate kinase from Rhodopseudomonas palustris (strain ATCC BAA-98 / CGA009).